The following is a 346-amino-acid chain: MTETLTIRRPDDWHVHLRDRDVLRGVVPYTARQFARAIVMPNLSPPMTDVAGVAAYRDRILAALPQGSAFTPLMTLYLTDSTDIEEVARGFAEGVFVAAKLYPAHATTGSAHGVTDIRNIYPVLEKMQEIGMPLLIHGEVTDSHVDIFDREAVFIERTLTRLVADMPALRIVFEHITTEEAAQFVEGAGDSIAATITPQHLHINRNAMLVGGIRPHAFCLPVAKREKHRLALRKLATSGFSRVFLGTDTAPHAKHLKEAACGCAGIFNAPFALESYVTVFDEEGALDRFEAFASLNGPAFYRMPVNEDRIVLERAPIEVPEVIDCNGTAIVPFHAGETLGWRIAAA.

The Zn(2+) site is built by His14 and His16. Residues 16 to 18 (HLR) and Asn42 contribute to the substrate site. Lys100, His137, and His175 together coordinate Zn(2+). Lys100 carries the N6-carboxylysine modification. His137 is a binding site for substrate. Leu220 serves as a coordination point for substrate. Residue Asp248 coordinates Zn(2+). Residue Asp248 is part of the active site. Positions 252 and 264 each coordinate substrate.

It belongs to the metallo-dependent hydrolases superfamily. DHOase family. Class II DHOase subfamily. In terms of assembly, homodimer. Zn(2+) serves as cofactor.

The catalysed reaction is (S)-dihydroorotate + H2O = N-carbamoyl-L-aspartate + H(+). It participates in pyrimidine metabolism; UMP biosynthesis via de novo pathway; (S)-dihydroorotate from bicarbonate: step 3/3. Its function is as follows. Catalyzes the reversible cyclization of carbamoyl aspartate to dihydroorotate. This chain is Dihydroorotase, found in Novosphingobium aromaticivorans (strain ATCC 700278 / DSM 12444 / CCUG 56034 / CIP 105152 / NBRC 16084 / F199).